Consider the following 921-residue polypeptide: Isoleucine--tRNA ligase (921 aa).

A 'HIGH' region motif is present at residues 57 to 67; the sequence is PYANGELHMGH. Position 552 (glutamate 552) interacts with L-isoleucyl-5'-AMP. The 'KMSKS' region signature appears at 593–597; it reads KMSKS. An ATP-binding site is contributed by lysine 596. Cysteine 888, cysteine 891, cysteine 908, and cysteine 911 together coordinate Zn(2+).

Belongs to the class-I aminoacyl-tRNA synthetase family. IleS type 1 subfamily. In terms of assembly, monomer. Requires Zn(2+) as cofactor.

It localises to the cytoplasm. The enzyme catalyses tRNA(Ile) + L-isoleucine + ATP = L-isoleucyl-tRNA(Ile) + AMP + diphosphate. Its function is as follows. Catalyzes the attachment of isoleucine to tRNA(Ile). As IleRS can inadvertently accommodate and process structurally similar amino acids such as valine, to avoid such errors it has two additional distinct tRNA(Ile)-dependent editing activities. One activity is designated as 'pretransfer' editing and involves the hydrolysis of activated Val-AMP. The other activity is designated 'posttransfer' editing and involves deacylation of mischarged Val-tRNA(Ile). This Listeria innocua serovar 6a (strain ATCC BAA-680 / CLIP 11262) protein is Isoleucine--tRNA ligase.